Consider the following 308-residue polypeptide: D-alanine--D-alanine ligase (308 aa).

The region spanning 102-302 (KHVAKAAGIP…FGEFLRWMVE (201 aa)) is the ATP-grasp domain. Residue 128–183 (PMKPPYVVKPVREGSSFGVVIVKEDQSHPPQVITSSEWRYGDRVMVERYIAGREFT) coordinates ATP. Mg(2+) is bound by residues Asp252, Glu269, and Asn271.

Belongs to the D-alanine--D-alanine ligase family. Mg(2+) serves as cofactor. Mn(2+) is required as a cofactor.

It is found in the cytoplasm. The enzyme catalyses 2 D-alanine + ATP = D-alanyl-D-alanine + ADP + phosphate + H(+). The protein operates within cell wall biogenesis; peptidoglycan biosynthesis. Functionally, cell wall formation. The polypeptide is D-alanine--D-alanine ligase (Rhizobium meliloti (strain 1021) (Ensifer meliloti)).